A 120-amino-acid polypeptide reads, in one-letter code: NAD(P)H-quinone oxidoreductase subunit 3, chloroplastic (120 aa).

3 helical membrane passes run 9-29 (IFWAFLIISSVIPIFAFIISG), 60-80 (ICYYMFALVFVVFDVETVFLY), and 88-108 (ILGVSVFIEALIFVLILIVGS).

The protein belongs to the complex I subunit 3 family. As to quaternary structure, NDH is composed of at least 16 different subunits, 5 of which are encoded in the nucleus.

It localises to the plastid. Its subcellular location is the chloroplast thylakoid membrane. It catalyses the reaction a plastoquinone + NADH + (n+1) H(+)(in) = a plastoquinol + NAD(+) + n H(+)(out). The catalysed reaction is a plastoquinone + NADPH + (n+1) H(+)(in) = a plastoquinol + NADP(+) + n H(+)(out). NDH shuttles electrons from NAD(P)H:plastoquinone, via FMN and iron-sulfur (Fe-S) centers, to quinones in the photosynthetic chain and possibly in a chloroplast respiratory chain. The immediate electron acceptor for the enzyme in this species is believed to be plastoquinone. Couples the redox reaction to proton translocation, and thus conserves the redox energy in a proton gradient. This is NAD(P)H-quinone oxidoreductase subunit 3, chloroplastic from Morus indica (Mulberry).